The following is a 340-amino-acid chain: Outer membrane protein U (340 aa).

The N-terminal stretch at 1 to 21 is a signal peptide; it reads MKKTLIALSVSAAAVATGVNA.

It belongs to the Gram-negative porin family. As to quaternary structure, homotrimer.

Its subcellular location is the cell outer membrane. Functionally, forms pores that allow passive diffusion of small molecules across the outer membrane. The sequence is that of Outer membrane protein U (ompU) from Vibrio vulnificus (strain CMCP6).